A 59-amino-acid polypeptide reads, in one-letter code: Large ribosomal subunit protein bL32 (59 aa).

The protein belongs to the bacterial ribosomal protein bL32 family.

This chain is Large ribosomal subunit protein bL32, found in Thermodesulfovibrio yellowstonii (strain ATCC 51303 / DSM 11347 / YP87).